The chain runs to 201 residues: Translation initiation factor IF-3 (201 aa).

The protein belongs to the IF-3 family. In terms of assembly, monomer.

The protein resides in the cytoplasm. Functionally, IF-3 binds to the 30S ribosomal subunit and shifts the equilibrium between 70S ribosomes and their 50S and 30S subunits in favor of the free subunits, thus enhancing the availability of 30S subunits on which protein synthesis initiation begins. The protein is Translation initiation factor IF-3 of Mycoplasma pneumoniae (strain ATCC 29342 / M129 / Subtype 1) (Mycoplasmoides pneumoniae).